Here is a 422-residue protein sequence, read N- to C-terminus: UDP-N-acetylglucosamine 1-carboxyvinyltransferase (422 aa).

22–23 (KN) contributes to the phosphoenolpyruvate binding site. Arg-93 contacts UDP-N-acetyl-alpha-D-glucosamine. Cys-117 functions as the Proton donor in the catalytic mechanism. Cys-117 bears the 2-(S-cysteinyl)pyruvic acid O-phosphothioketal mark. Residues 122-126 (RPVDL), Asp-308, and Leu-330 contribute to the UDP-N-acetyl-alpha-D-glucosamine site.

This sequence belongs to the EPSP synthase family. MurA subfamily.

The protein resides in the cytoplasm. It carries out the reaction phosphoenolpyruvate + UDP-N-acetyl-alpha-D-glucosamine = UDP-N-acetyl-3-O-(1-carboxyvinyl)-alpha-D-glucosamine + phosphate. The protein operates within cell wall biogenesis; peptidoglycan biosynthesis. Functionally, cell wall formation. Adds enolpyruvyl to UDP-N-acetylglucosamine. The sequence is that of UDP-N-acetylglucosamine 1-carboxyvinyltransferase from Helicobacter acinonychis (strain Sheeba).